The following is a 948-amino-acid chain: Valine--tRNA ligase (948 aa).

The 'HIGH' region motif lies at 40-50 (PNVTGSLHMGH). Residues 551–555 (KMSKS) carry the 'KMSKS' region motif. K554 is a binding site for ATP. A coiled-coil region spans residues 879-947 (LIDKGAELAR…LAEQHARISS (69 aa)).

Belongs to the class-I aminoacyl-tRNA synthetase family. ValS type 1 subfamily. In terms of assembly, monomer.

It is found in the cytoplasm. The enzyme catalyses tRNA(Val) + L-valine + ATP = L-valyl-tRNA(Val) + AMP + diphosphate. Catalyzes the attachment of valine to tRNA(Val). As ValRS can inadvertently accommodate and process structurally similar amino acids such as threonine, to avoid such errors, it has a 'posttransfer' editing activity that hydrolyzes mischarged Thr-tRNA(Val) in a tRNA-dependent manner. The chain is Valine--tRNA ligase from Pseudomonas fluorescens (strain ATCC BAA-477 / NRRL B-23932 / Pf-5).